Reading from the N-terminus, the 997-residue chain is NLR family CARD domain-containing protein 4 (997 aa).

One can recognise a CARD domain in the interval 1 to 88 (MDLIRKNYAE…FFYEDLIGQR (88 aa)). The nucleotide-binding domain (NBD) stretch occupies residues 95–300 (EEDLENLADH…RCGALIAETS (206 aa)). An NACHT domain is found at 165–478 (SPCVIEGEAG…VTKGEDFLNK (314 aa)). Residue 171–178 (GEAGKGKT) participates in ATP binding. Residues 358-465 (MNTQTTLFST…RLSQLLSSED (108 aa)) are winged-helix domain (WHD). LRR repeat units lie at residues 550–570 (LFSEKCLYINSHNISSHHIEF), 629–652 (NQSIQTLEVTLRDFHQLNKKDIKY), 708–731 (MTEMKTLSILNLHSEHLQGGLLEG), 735–758 (LVGLEKLVFHNIKIDKNDAKTLAE), 760–785 (ILSLKKLKRLSISHISNIGDGMESIA), 797–820 (ELKLIDCCLSAKALRSLGQSLYSL), 821–843 (SHIEILDLSGNYLLEEGKESVEE), 851–875 (LDAIRTLMLPGGTDVKFCLEAVLPT), 884–905 (ELAFKRWNLTNDDLMTLASYIN), 908–935 (FENLSFLDLSDNCAQSAGWLSLTAILQY), 937–958 (PNLTYVNFSTEDLFTPDPDLVR), and 972–994 (TMELNNWQLDDFDLAQIKKAKNM).

It is found in the cytoplasm. The protein resides in the cytosol. Key component of inflammasomes that indirectly senses specific proteins from pathogenic bacteria and fungi and responds by assembling an inflammasome complex that promotes caspase-1 activation, cytokine production and macrophage pyroptosis. This chain is NLR family CARD domain-containing protein 4 (nlrc4), found in Xenopus tropicalis (Western clawed frog).